The chain runs to 428 residues: RNA-binding protein 34 (428 aa).

Disordered regions lie at residues 1-106 (MALR…KVKV) and 127-152 (DLEE…TDGE). An N6-acetyllysine modification is found at lysine 147. RRM domains lie at 183 to 278 (RTVF…LASE) and 285 to 362 (RSVF…RSVN). Lysine 240 is covalently cross-linked (Glycyl lysine isopeptide (Lys-Gly) (interchain with G-Cter in SUMO2)). A Phosphoserine modification is found at serine 286. A disordered region spans residues 361-428 (VNKEKLKQQN…GQTKKPRKQK (68 aa)). The segment covering 408-428 (LMKKKKGQKKKGQTKKPRKQK) has biased composition (basic residues).

This sequence belongs to the RRM RBM34 family.

The protein localises to the nucleus. It localises to the nucleolus. This Rattus norvegicus (Rat) protein is RNA-binding protein 34 (Rbm34).